We begin with the raw amino-acid sequence, 150 residues long: D-aminoacyl-tRNA deacylase (150 aa).

A Gly-cisPro motif, important for rejection of L-amino acids motif is present at residues 138 to 139 (GP).

It belongs to the DTD family. In terms of assembly, homodimer.

It localises to the cytoplasm. It catalyses the reaction glycyl-tRNA(Ala) + H2O = tRNA(Ala) + glycine + H(+). It carries out the reaction a D-aminoacyl-tRNA + H2O = a tRNA + a D-alpha-amino acid + H(+). An aminoacyl-tRNA editing enzyme that deacylates mischarged D-aminoacyl-tRNAs. Also deacylates mischarged glycyl-tRNA(Ala), protecting cells against glycine mischarging by AlaRS. Acts via tRNA-based rather than protein-based catalysis; rejects L-amino acids rather than detecting D-amino acids in the active site. By recycling D-aminoacyl-tRNA to D-amino acids and free tRNA molecules, this enzyme counteracts the toxicity associated with the formation of D-aminoacyl-tRNA entities in vivo and helps enforce protein L-homochirality. The polypeptide is D-aminoacyl-tRNA deacylase (Natranaerobius thermophilus (strain ATCC BAA-1301 / DSM 18059 / JW/NM-WN-LF)).